The chain runs to 356 residues: Vacuolar protein sorting-associated protein 26 (356 aa).

The tract at residues methionine 301–serine 356 is disordered. The span at threonine 315–phenylalanine 324 shows a compositional bias: polar residues. The segment covering glutamate 331–proline 342 has biased composition (basic and acidic residues).

Belongs to the VPS26 family.

Its function is as follows. May play a role in vesicular protein sorting, similar to the yeast retromer proteins. The protein is Vacuolar protein sorting-associated protein 26 (vps-26) of Caenorhabditis elegans.